The sequence spans 238 residues: Zinc import ATP-binding protein ZnuC (238 aa).

In terms of domain architecture, ABC transporter spans V5–K220. G37–S44 contributes to the ATP binding site.

It belongs to the ABC transporter superfamily. Zinc importer (TC 3.A.1.15.5) family. As to quaternary structure, the complex is composed of two ATP-binding proteins (ZnuC), two transmembrane proteins (ZnuB) and a solute-binding protein (ZnuA).

The protein localises to the cell inner membrane. The enzyme catalyses Zn(2+)(out) + ATP(in) + H2O(in) = Zn(2+)(in) + ADP(in) + phosphate(in) + H(+)(in). Part of the ABC transporter complex ZnuABC involved in zinc import. Responsible for energy coupling to the transport system. This is Zinc import ATP-binding protein ZnuC from Buchnera aphidicola subsp. Acyrthosiphon pisum (strain APS) (Acyrthosiphon pisum symbiotic bacterium).